The primary structure comprises 453 residues: Tubulin gamma chain (453 aa).

A GTP-binding site is contributed by 142–148; that stretch reads AGGTGSG.

The protein belongs to the tubulin family.

The protein localises to the cytoplasm. Its subcellular location is the cytoskeleton. The protein resides in the microtubule organizing center. It is found in the spindle pole body. Its function is as follows. Tubulin is the major constituent of microtubules. The gamma chain is found at microtubule organizing centers (MTOC) such as the spindle poles or the centrosome, suggesting that it is involved in the minus-end nucleation of microtubule assembly. The protein is Tubulin gamma chain (TUB4) of Coprinopsis cinerea (strain Okayama-7 / 130 / ATCC MYA-4618 / FGSC 9003) (Inky cap fungus).